The primary structure comprises 580 residues: Fumarate hydratase class I, aerobic (580 aa).

[4Fe-4S] cluster is bound by residues C105, C224, and C318.

It belongs to the class-I fumarase family. Homodimer. [4Fe-4S] cluster is required as a cofactor.

The catalysed reaction is (S)-malate = fumarate + H2O. It catalyses the reaction oxaloacetate = enol-oxaloacetate. The protein operates within carbohydrate metabolism; tricarboxylic acid cycle; (S)-malate from fumarate: step 1/1. Its function is as follows. Catalyzes the reversible hydration of fumarate to (S)-malate. Functions as an aerobic enzyme in the direction of malate formation as part of the citric acid cycle. Accounts for about 80% of the fumarase activity when the bacteria grow aerobically. To a lesser extent, also displays D-tartrate dehydratase activity in vitro, but is not able to convert (R)-malate, L-tartrate or meso-tartrate. Can also catalyze the isomerization of enol- to keto-oxaloacetate. This is Fumarate hydratase class I, aerobic from Salmonella typhimurium (strain LT2 / SGSC1412 / ATCC 700720).